We begin with the raw amino-acid sequence, 68 residues long: Phycobilisome 7.8 kDa linker polypeptide, allophycocyanin-associated, core (68 aa).

A CpcD-like domain is found at 2–57 (SRLFKITALVPSLSRTRTQRELQNTYFTKLVPYENWFREQQRIQKAGGKIIKVELA).

It belongs to the phycobilisome linker protein family.

It is found in the cellular thylakoid membrane. Its function is as follows. Rod linker protein, associated with allophycocyanin. Linker polypeptides determine the state of aggregation and the location of the disk-shaped phycobiliprotein units within the phycobilisome and modulate their spectroscopic properties in order to mediate a directed and optimal energy transfer. In Nostoc sp. (strain PCC 7120 / SAG 25.82 / UTEX 2576), this protein is Phycobilisome 7.8 kDa linker polypeptide, allophycocyanin-associated, core (apcC).